Consider the following 190-residue polypeptide: Ribonuclease HII (190 aa).

Positions 1–190 constitute an RNase H type-2 domain; sequence MAGVDEVGRG…FCRKIIENPD (190 aa). A divalent metal cation contacts are provided by aspartate 5, glutamate 6, and aspartate 101.

This sequence belongs to the RNase HII family. Mn(2+) serves as cofactor. The cofactor is Mg(2+).

The protein localises to the cytoplasm. It carries out the reaction Endonucleolytic cleavage to 5'-phosphomonoester.. Functionally, endonuclease that specifically degrades the RNA of RNA-DNA hybrids. The protein is Ribonuclease HII (rnhB) of Synechocystis sp. (strain ATCC 27184 / PCC 6803 / Kazusa).